The chain runs to 274 residues: NH(3)-dependent NAD(+) synthetase (274 aa).

ATP is bound at residue G46–S53. Residue D52 participates in Mg(2+) binding. R140 is a binding site for deamido-NAD(+). T160 contributes to the ATP binding site. E165 contributes to the Mg(2+) binding site. Positions 173 and 180 each coordinate deamido-NAD(+). Positions 189 and 211 each coordinate ATP. Residue H260–K261 participates in deamido-NAD(+) binding.

This sequence belongs to the NAD synthetase family. As to quaternary structure, homodimer.

The catalysed reaction is deamido-NAD(+) + NH4(+) + ATP = AMP + diphosphate + NAD(+) + H(+). It functions in the pathway cofactor biosynthesis; NAD(+) biosynthesis; NAD(+) from deamido-NAD(+) (ammonia route): step 1/1. In terms of biological role, catalyzes the ATP-dependent amidation of deamido-NAD to form NAD. Uses ammonia as a nitrogen source. The chain is NH(3)-dependent NAD(+) synthetase from Streptococcus mutans serotype c (strain ATCC 700610 / UA159).